A 376-amino-acid chain; its full sequence is Chaperone protein DnaJ (376 aa).

A J domain is found at 5–70 (DYYEVLGVAR…EKRARYDRFG (66 aa)). The CR-type zinc finger occupies 137–215 (GDEVTLRLPK…CKGSGQTQQV (79 aa)). Zn(2+) is bound by residues cysteine 150, cysteine 153, cysteine 167, cysteine 170, cysteine 189, cysteine 192, cysteine 203, and cysteine 206. 4 CXXCXGXG motif repeats span residues 150-157 (CDECGGSG), 167-174 (CRHCGGAG), 189-196 (CPVCRGEG), and 203-210 (CPKCKGSG).

The protein belongs to the DnaJ family. As to quaternary structure, homodimer. It depends on Zn(2+) as a cofactor.

It is found in the cytoplasm. In terms of biological role, participates actively in the response to hyperosmotic and heat shock by preventing the aggregation of stress-denatured proteins and by disaggregating proteins, also in an autonomous, DnaK-independent fashion. Unfolded proteins bind initially to DnaJ; upon interaction with the DnaJ-bound protein, DnaK hydrolyzes its bound ATP, resulting in the formation of a stable complex. GrpE releases ADP from DnaK; ATP binding to DnaK triggers the release of the substrate protein, thus completing the reaction cycle. Several rounds of ATP-dependent interactions between DnaJ, DnaK and GrpE are required for fully efficient folding. Also involved, together with DnaK and GrpE, in the DNA replication of plasmids through activation of initiation proteins. The polypeptide is Chaperone protein DnaJ (Nitratidesulfovibrio vulgaris (strain ATCC 29579 / DSM 644 / CCUG 34227 / NCIMB 8303 / VKM B-1760 / Hildenborough) (Desulfovibrio vulgaris)).